Here is a 2068-residue protein sequence, read N- to C-terminus: Lipoxygenase homology domain-containing protein 1 (2068 aa).

PLAT domains follow at residues 43 to 160, 172 to 287, 296 to 412, 425 to 540, 553 to 673, 684 to 803, 814 to 934, 970 to 1088, 1101 to 1226, 1255 to 1373, 1422 to 1540, 1553 to 1668, 1680 to 1798, 1811 to 1932, and 1949 to 2065; these read KVYE…RDLL, NKYE…RDIL, ITYI…RQLY, YPWS…REMT, ARYR…RELL, FRYH…VELY, VHYE…RELL, TTFS…RDLF, VPYE…RELV, VLYS…RLFY, IPYY…RVFD, VLYE…CEIC, TSYT…RDFA, TTYE…VFEV, and VKYE…RELF.

Expressed in the inner ear, specifically in hair cells. Higher expression is detected in the cochlea.

It localises to the cell projection. Its subcellular location is the stereocilium. In terms of biological role, required for normal function of hair cells in the inner ear. The chain is Lipoxygenase homology domain-containing protein 1 (Loxhd1) from Mus musculus (Mouse).